A 38-amino-acid chain; its full sequence is Large ribosomal subunit protein bL36A (38 aa).

Belongs to the bacterial ribosomal protein bL36 family.

In Enterobacter sp. (strain 638), this protein is Large ribosomal subunit protein bL36A.